Here is a 183-residue protein sequence, read N- to C-terminus: ATP synthase subunit delta (183 aa).

Belongs to the ATPase delta chain family. F-type ATPases have 2 components, F(1) - the catalytic core - and F(0) - the membrane proton channel. F(1) has five subunits: alpha(3), beta(3), gamma(1), delta(1), epsilon(1). F(0) has three main subunits: a(1), b(2) and c(10-14). The alpha and beta chains form an alternating ring which encloses part of the gamma chain. F(1) is attached to F(0) by a central stalk formed by the gamma and epsilon chains, while a peripheral stalk is formed by the delta and b chains.

The protein localises to the cell inner membrane. F(1)F(0) ATP synthase produces ATP from ADP in the presence of a proton or sodium gradient. F-type ATPases consist of two structural domains, F(1) containing the extramembraneous catalytic core and F(0) containing the membrane proton channel, linked together by a central stalk and a peripheral stalk. During catalysis, ATP synthesis in the catalytic domain of F(1) is coupled via a rotary mechanism of the central stalk subunits to proton translocation. In terms of biological role, this protein is part of the stalk that links CF(0) to CF(1). It either transmits conformational changes from CF(0) to CF(1) or is implicated in proton conduction. The chain is ATP synthase subunit delta from Desulfatibacillum aliphaticivorans.